A 709-amino-acid polypeptide reads, in one-letter code: Elongation factor G (709 aa).

One can recognise a tr-type G domain in the interval 6-295 (KFLRNIGIMA…AVCTYLPSPL (290 aa)). Residues 15 to 22 (AHIDAGKT), 92 to 96 (DTPGH), and 146 to 149 (NKMD) contribute to the GTP site.

Belongs to the TRAFAC class translation factor GTPase superfamily. Classic translation factor GTPase family. EF-G/EF-2 subfamily.

The protein localises to the cytoplasm. Its function is as follows. Catalyzes the GTP-dependent ribosomal translocation step during translation elongation. During this step, the ribosome changes from the pre-translocational (PRE) to the post-translocational (POST) state as the newly formed A-site-bound peptidyl-tRNA and P-site-bound deacylated tRNA move to the P and E sites, respectively. Catalyzes the coordinated movement of the two tRNA molecules, the mRNA and conformational changes in the ribosome. This is Elongation factor G from Amoebophilus asiaticus (strain 5a2).